Here is a 572-residue protein sequence, read N- to C-terminus: Proline--tRNA ligase (572 aa).

The protein belongs to the class-II aminoacyl-tRNA synthetase family. ProS type 1 subfamily. In terms of assembly, homodimer.

It localises to the cytoplasm. It carries out the reaction tRNA(Pro) + L-proline + ATP = L-prolyl-tRNA(Pro) + AMP + diphosphate. Functionally, catalyzes the attachment of proline to tRNA(Pro) in a two-step reaction: proline is first activated by ATP to form Pro-AMP and then transferred to the acceptor end of tRNA(Pro). As ProRS can inadvertently accommodate and process non-cognate amino acids such as alanine and cysteine, to avoid such errors it has two additional distinct editing activities against alanine. One activity is designated as 'pretransfer' editing and involves the tRNA(Pro)-independent hydrolysis of activated Ala-AMP. The other activity is designated 'posttransfer' editing and involves deacylation of mischarged Ala-tRNA(Pro). The misacylated Cys-tRNA(Pro) is not edited by ProRS. The protein is Proline--tRNA ligase of Serratia proteamaculans (strain 568).